Consider the following 396-residue polypeptide: S-adenosylmethionine synthase (396 aa).

H16 contacts ATP. Mg(2+) is bound at residue D18. E44 is a K(+) binding site. E57 and Q100 together coordinate L-methionine. Residues 100 to 110 (QSPDIAQGVDR) form a flexible loop region. ATP contacts are provided by residues 167 to 169 (DAK), 233 to 234 (RF), D242, 248 to 249 (RK), A265, and K269. L-methionine is bound at residue D242. K273 lines the L-methionine pocket.

This sequence belongs to the AdoMet synthase family. Homotetramer; dimer of dimers. Mg(2+) is required as a cofactor. K(+) serves as cofactor.

It is found in the cytoplasm. The enzyme catalyses L-methionine + ATP + H2O = S-adenosyl-L-methionine + phosphate + diphosphate. The protein operates within amino-acid biosynthesis; S-adenosyl-L-methionine biosynthesis; S-adenosyl-L-methionine from L-methionine: step 1/1. Its function is as follows. Catalyzes the formation of S-adenosylmethionine (AdoMet) from methionine and ATP. The overall synthetic reaction is composed of two sequential steps, AdoMet formation and the subsequent tripolyphosphate hydrolysis which occurs prior to release of AdoMet from the enzyme. The protein is S-adenosylmethionine synthase of Paraburkholderia phytofirmans (strain DSM 17436 / LMG 22146 / PsJN) (Burkholderia phytofirmans).